A 190-amino-acid chain; its full sequence is Elongation factor P (190 aa).

Belongs to the elongation factor P family.

The protein resides in the cytoplasm. The protein operates within protein biosynthesis; polypeptide chain elongation. In terms of biological role, involved in peptide bond synthesis. Stimulates efficient translation and peptide-bond synthesis on native or reconstituted 70S ribosomes in vitro. Probably functions indirectly by altering the affinity of the ribosome for aminoacyl-tRNA, thus increasing their reactivity as acceptors for peptidyl transferase. This is Elongation factor P from Pseudomonas fluorescens (strain ATCC BAA-477 / NRRL B-23932 / Pf-5).